The sequence spans 546 residues: Mitochondrial distribution and morphology protein 34 (546 aa).

In terms of domain architecture, SMP-LTD spans 1-195; the sequence is MAFNFNWSPL…LPAIIHRLSL (195 aa). 5 disordered regions span residues 208-230, 299-319, 344-382, 395-416, and 517-546; these read EVKADEEAGPGQDPLLSPPQDPV, SHGGLISPASPPLSRTHSHVA, TMGAGRHPRTRPSRKHKRRVVDLRKPQKLDDTSSTCTDS, SSSARVGEKPDDPITPPVSPDA, and RRIQEGKGPGSVGSNYCGRRDPSPPPAYGQ. Basic residues predominate over residues 349–362; that stretch reads RHPRTRPSRKHKRR. The segment covering 363–374 has biased composition (basic and acidic residues); sequence VVDLRKPQKLDD.

It belongs to the MDM34 family. Component of the ER-mitochondria encounter structure (ERMES) or MDM complex, composed of MMM1, MDM10, MDM12 and MDM34.

The protein localises to the mitochondrion outer membrane. Component of the ERMES/MDM complex, which serves as a molecular tether to connect the endoplasmic reticulum (ER) and mitochondria. Components of this complex are involved in the control of mitochondrial shape and protein biogenesis, and function in nonvesicular lipid trafficking between the ER and mitochondria. MDM34 is required for the interaction of the ER-resident membrane protein MMM1 and the outer mitochondrial membrane-resident beta-barrel protein MDM10. The protein is Mitochondrial distribution and morphology protein 34 of Arthroderma otae (strain ATCC MYA-4605 / CBS 113480) (Microsporum canis).